The following is a 72-amino-acid chain: ATP synthase subunit c (72 aa).

A run of 2 helical transmembrane segments spans residues 1–21 (MSLG…GAGI) and 48–68 (MFIG…FSFI).

The protein belongs to the ATPase C chain family. F-type ATPases have 2 components, F(1) - the catalytic core - and F(0) - the membrane proton channel. F(1) has five subunits: alpha(3), beta(3), gamma(1), delta(1), epsilon(1). F(0) has three main subunits: a(1), b(2) and c(10-14). The alpha and beta chains form an alternating ring which encloses part of the gamma chain. F(1) is attached to F(0) by a central stalk formed by the gamma and epsilon chains, while a peripheral stalk is formed by the delta and b chains.

The protein localises to the cell membrane. Its function is as follows. F(1)F(0) ATP synthase produces ATP from ADP in the presence of a proton or sodium gradient. F-type ATPases consist of two structural domains, F(1) containing the extramembraneous catalytic core and F(0) containing the membrane proton channel, linked together by a central stalk and a peripheral stalk. During catalysis, ATP synthesis in the catalytic domain of F(1) is coupled via a rotary mechanism of the central stalk subunits to proton translocation. Key component of the F(0) channel; it plays a direct role in translocation across the membrane. A homomeric c-ring of between 10-14 subunits forms the central stalk rotor element with the F(1) delta and epsilon subunits. In Geobacillus kaustophilus (strain HTA426), this protein is ATP synthase subunit c.